Consider the following 189-residue polypeptide: Large ribosomal subunit protein uL5 (189 aa).

The protein belongs to the universal ribosomal protein uL5 family. In terms of assembly, part of the 50S ribosomal subunit; part of the 5S rRNA/L5/L18/L25 subcomplex. Contacts the 5S rRNA and the P site tRNA. Forms a bridge to the 30S subunit in the 70S ribosome.

In terms of biological role, this is one of the proteins that bind and probably mediate the attachment of the 5S RNA into the large ribosomal subunit, where it forms part of the central protuberance. In the 70S ribosome it contacts protein S13 of the 30S subunit (bridge B1b), connecting the 2 subunits; this bridge is implicated in subunit movement. Contacts the P site tRNA; the 5S rRNA and some of its associated proteins might help stabilize positioning of ribosome-bound tRNAs. The protein is Large ribosomal subunit protein uL5 of Salinispora tropica (strain ATCC BAA-916 / DSM 44818 / JCM 13857 / NBRC 105044 / CNB-440).